Here is a 560-residue protein sequence, read N- to C-terminus: Triacylglyceride transporter MSMEG_3069/MSMEI_2992 (560 aa).

Transmembrane regions (helical) follow at residues 16 to 36 (LAVL…VDIM), 48 to 68 (QVTP…PLLG), 78 to 98 (MLIQ…ALSS), 108 to 128 (IIQG…AADL), 143 to 163 (AAQE…VWLF), 168 to 188 (AVFW…HFSL), 200 to 220 (VDVI…VGLY), 229 to 249 (VLPS…VAFF), 269 to 289 (PFLA…VTLV), 307 to 327 (AFLL…GGWL), 336 to 356 (VVLI…HWSV), 368 to 388 (FTLP…GLVI), 411 to 431 (VVVA…AWGF), and 477 to 497 (IFLS…LISG). The interval 362 to 371 (RHNLGLFTLP) is beta-hairpin. The tract at residues 519 to 560 (IDPYDAGDADDAPTEMLDLPTQVLSAPPSDPGDERPGRHRAP) is disordered.

The protein belongs to the major facilitator superfamily. P55 (TC 2.A.1.3.34) family.

It localises to the cell inner membrane. With respect to regulation, resistance to ethidium bromide is inhibited by reserpine. Functionally, in association with lipoprotein LprG transports triacyglycerides (TAG) across the inner cell membrane into the periplasm; TAG probably regulates lipid metabolism and growth regulation and plays a structural role in the outer membrane. TAG (and maybe other lipids) enters the central cavity of the P55 transporter from within the cell inner membrane via clefts on the cytoplasmic face of P55 between TM5-TM8 and TM2-TM11. From there the lipid is probably transferred to the hydrophobic cavity of LprG. Confers resistance to ethidium bromide, possibly acting as an efflux pump, requires LprG lipoprotein for normal function. Export of ethidium bromide can be complemented by the equivalent operon from M.tuberculosis (lprG-Rv1410c). Involved in drug susceptibilty, its expression alone partially complements the antibiotic susceptibilty of a double lprG-mfs deletion. Probably does not function as a bona fide drug efflux pump, but instead plays a role in outer membrane biogenesis. Probably required with LprG for normal surface localization of lipoarabinomannan (LAM). The protein is Triacylglyceride transporter MSMEG_3069/MSMEI_2992 of Mycolicibacterium smegmatis (strain ATCC 700084 / mc(2)155) (Mycobacterium smegmatis).